We begin with the raw amino-acid sequence, 228 residues long: MASEELQKDLEEVKVLLEKATRKRVRDALTAEKSKIETEIKNKMQQKSQKKAELLDNEKPAAVVAPITTGYTVKISNYGWDQSDKFVKIYITLTGVHQVPTENVQVHFTERSFDLLVKNLNGKSYSMIVNNLLKPISVEGSSKKVKTDTVLILCRKKVENTRWDYLTQVEKERKEKEKPSYDAETDPSEGLMNVLKKIYEDGDDDMKRTINKAWVESREKQAKGDTEF.

The residue at position 2 (A2) is an N-acetylalanine. The segment at 2 to 80 (ASEELQKDLE…YTVKISNYGW (79 aa)) is interaction with SIAH1. A Phosphoserine modification is found at S3. 2 positions are modified to N6-acetyllysine: K8 and K19. The residue at position 34 (S34) is a Phosphoserine. Residues 73–167 (VKISNYGWDQ…VENTRWDYLT (95 aa)) form the CS domain. The segment at 73–228 (VKISNYGWDQ…EKQAKGDTEF (156 aa)) is interaction with SKP1. Residues K85 and K118 each carry the N6-acetyllysine modification. Residues 154–228 (CRKKVENTRW…EKQAKGDTEF (75 aa)) are interaction with S100A6. Residues 168 to 228 (QVEKERKEKE…EKQAKGDTEF (61 aa)) enclose the SGS domain.

Interacts with protein of the S100 family S100A1, S100A6, S100B, S100P and S100A12 in a calcium-dependent manner. Component of some large E3 complex at least composed of UBE2D1, SIAH1, CACYBP/SIP, SKP1, APC and TBL1X. Interacts directly with SIAH1, SIAH2 and SKP1. In terms of processing, phosphorylated on serine residues. Phosphorylated upon induction by RA or at high calcium concentrations.

Its subcellular location is the cytoplasm. It localises to the nucleus. Its function is as follows. May be involved in calcium-dependent ubiquitination and subsequent proteasomal degradation of target proteins. Probably serves as a molecular bridge in ubiquitin E3 complexes. Participates in the ubiquitin-mediated degradation of beta-catenin (CTNNB1). This Pongo abelii (Sumatran orangutan) protein is Calcyclin-binding protein (CACYBP).